The chain runs to 219 residues: Endonuclease III (219 aa).

The HhH domain occupies arginine 109–serine 128. Cysteine 189, cysteine 196, cysteine 199, and cysteine 205 together coordinate [4Fe-4S] cluster.

This sequence belongs to the Nth/MutY family. It depends on [4Fe-4S] cluster as a cofactor.

It carries out the reaction 2'-deoxyribonucleotide-(2'-deoxyribose 5'-phosphate)-2'-deoxyribonucleotide-DNA = a 3'-end 2'-deoxyribonucleotide-(2,3-dehydro-2,3-deoxyribose 5'-phosphate)-DNA + a 5'-end 5'-phospho-2'-deoxyribonucleoside-DNA + H(+). In terms of biological role, DNA repair enzyme that has both DNA N-glycosylase activity and AP-lyase activity. The DNA N-glycosylase activity releases various damaged pyrimidines from DNA by cleaving the N-glycosidic bond, leaving an AP (apurinic/apyrimidinic) site. The AP-lyase activity cleaves the phosphodiester bond 3' to the AP site by a beta-elimination, leaving a 3'-terminal unsaturated sugar and a product with a terminal 5'-phosphate. In Bacillus subtilis (strain 168), this protein is Endonuclease III.